A 282-amino-acid polypeptide reads, in one-letter code: Elongation factor Ts (282 aa).

Residues 80 to 83 (TDFV) form an involved in Mg(2+) ion dislocation from EF-Tu region.

It belongs to the EF-Ts family.

The protein localises to the cytoplasm. Its function is as follows. Associates with the EF-Tu.GDP complex and induces the exchange of GDP to GTP. It remains bound to the aminoacyl-tRNA.EF-Tu.GTP complex up to the GTP hydrolysis stage on the ribosome. This is Elongation factor Ts from Chlamydia trachomatis serovar L2b (strain UCH-1/proctitis).